A 485-amino-acid polypeptide reads, in one-letter code: Glutamyl-tRNA(Gln) amidotransferase subunit A (485 aa).

Catalysis depends on charge relay system residues K79 and S154. The active-site Acyl-ester intermediate is the S178.

It belongs to the amidase family. GatA subfamily. Heterotrimer of A, B and C subunits.

It carries out the reaction L-glutamyl-tRNA(Gln) + L-glutamine + ATP + H2O = L-glutaminyl-tRNA(Gln) + L-glutamate + ADP + phosphate + H(+). Allows the formation of correctly charged Gln-tRNA(Gln) through the transamidation of misacylated Glu-tRNA(Gln) in organisms which lack glutaminyl-tRNA synthetase. The reaction takes place in the presence of glutamine and ATP through an activated gamma-phospho-Glu-tRNA(Gln). This chain is Glutamyl-tRNA(Gln) amidotransferase subunit A, found in Staphylococcus aureus (strain MW2).